The primary structure comprises 191 residues: Orotate phosphoribosyltransferase (191 aa).

Residue 114 to 122 (EDVVTTGKS) coordinates 5-phospho-alpha-D-ribose 1-diphosphate. Orotate contacts are provided by T118 and R146.

Belongs to the purine/pyrimidine phosphoribosyltransferase family. PyrE subfamily. As to quaternary structure, homodimer. Mg(2+) is required as a cofactor.

It carries out the reaction orotidine 5'-phosphate + diphosphate = orotate + 5-phospho-alpha-D-ribose 1-diphosphate. It functions in the pathway pyrimidine metabolism; UMP biosynthesis via de novo pathway; UMP from orotate: step 1/2. Catalyzes the transfer of a ribosyl phosphate group from 5-phosphoribose 1-diphosphate to orotate, leading to the formation of orotidine monophosphate (OMP). The sequence is that of Orotate phosphoribosyltransferase from Clostridium botulinum (strain Langeland / NCTC 10281 / Type F).